The chain runs to 130 residues: Small ribosomal subunit protein uS11 (130 aa).

The protein belongs to the universal ribosomal protein uS11 family. Part of the 30S ribosomal subunit. Interacts with proteins S7 and S18. Binds to IF-3.

Functionally, located on the platform of the 30S subunit, it bridges several disparate RNA helices of the 16S rRNA. Forms part of the Shine-Dalgarno cleft in the 70S ribosome. The protein is Small ribosomal subunit protein uS11 of Shewanella frigidimarina (strain NCIMB 400).